The primary structure comprises 389 residues: Heat-inducible transcription repressor HrcA (389 aa).

Belongs to the HrcA family.

Functionally, negative regulator of class I heat shock genes (grpE-dnaK-dnaJ and groELS operons). Prevents heat-shock induction of these operons. The chain is Heat-inducible transcription repressor HrcA from Synechococcus sp. (strain JA-2-3B'a(2-13)) (Cyanobacteria bacterium Yellowstone B-Prime).